A 31-amino-acid polypeptide reads, in one-letter code: Cliotide T11 (31 aa).

A cross-link (cyclopeptide (Gly-Asn)) is located at residues 1-31 (GIPCGESCVFIPCTITALLGCSCKDKVCYKN). Cystine bridges form between Cys4–Cys21, Cys8–Cys23, and Cys13–Cys28.

Contains 3 disulfide bonds. Post-translationally, this is a cyclic peptide. In terms of tissue distribution, expressed in seed but not in root, nodule, flower, stem, shoot, leaf and pod (at protein level).

Probably participates in a plant defense mechanism. This chain is Cliotide T11, found in Clitoria ternatea (Butterfly pea).